The following is a 374-amino-acid chain: S-adenosylmethionine:tRNA ribosyltransferase-isomerase (374 aa).

This sequence belongs to the QueA family. As to quaternary structure, monomer.

It localises to the cytoplasm. The enzyme catalyses 7-aminomethyl-7-carbaguanosine(34) in tRNA + S-adenosyl-L-methionine = epoxyqueuosine(34) in tRNA + adenine + L-methionine + 2 H(+). The protein operates within tRNA modification; tRNA-queuosine biosynthesis. Its function is as follows. Transfers and isomerizes the ribose moiety from AdoMet to the 7-aminomethyl group of 7-deazaguanine (preQ1-tRNA) to give epoxyqueuosine (oQ-tRNA). The chain is S-adenosylmethionine:tRNA ribosyltransferase-isomerase from Prochlorococcus marinus (strain MIT 9215).